Here is a 109-residue protein sequence, read N- to C-terminus: Nucleoid-associated protein ETA_24730 (109 aa).

Belongs to the YbaB/EbfC family. In terms of assembly, homodimer.

It localises to the cytoplasm. Its subcellular location is the nucleoid. Functionally, binds to DNA and alters its conformation. May be involved in regulation of gene expression, nucleoid organization and DNA protection. This chain is Nucleoid-associated protein ETA_24730, found in Erwinia tasmaniensis (strain DSM 17950 / CFBP 7177 / CIP 109463 / NCPPB 4357 / Et1/99).